The sequence spans 1125 residues: Kinase and exchange factor for Rac B (1125 aa).

Disordered stretches follow at residues 50 to 175 (VTGG…ASIN), 247 to 287 (SVPG…GGKF), and 322 to 362 (KTRD…VNSD). Residues 59 to 91 (NNQQQQQNNNNNNNNNNNNNNNNNNNNNNNNNN) show a composition bias toward low complexity. Polar residues predominate over residues 92–106 (SGEISSNNSTPSILF). Positions 113–124 (TAPPAPPQPTTP) are enriched in pro residues. Over residues 137–161 (NINQQPIGGVNNNNNNNNKDSPSNK) the composition is skewed to low complexity. Positions 380–571 (KRRQVSLQIL…KSTVDYVKEK (192 aa)) constitute a DH domain. The 222-residue stretch at 601-822 (RYVREGMLTE…WIQAIHANII (222 aa)) folds into the PH domain. Disordered stretches follow at residues 693 to 729 (INNM…SNNN) and 761 to 791 (SNNN…YSNG). Over residues 694–729 (NNMTNNDSKSKNNNNNNSNGNNNNNNINSNSNSNNN) the composition is skewed to low complexity. The 270-residue stretch at 848–1117 (IKLCEQIGSG…QLVQKLTKML (270 aa)) folds into the Protein kinase domain. Residues 854-862 (IGSGGSGCT) and lysine 876 each bind ATP. Aspartate 971 functions as the Proton acceptor in the catalytic mechanism.

The protein belongs to the protein kinase superfamily. STE Ser/Thr protein kinase family. It depends on Mg(2+) as a cofactor.

The enzyme catalyses L-seryl-[protein] + ATP = O-phospho-L-seryl-[protein] + ADP + H(+). The catalysed reaction is L-threonyl-[protein] + ATP = O-phospho-L-threonyl-[protein] + ADP + H(+). The protein is Kinase and exchange factor for Rac B of Dictyostelium discoideum (Social amoeba).